Consider the following 339-residue polypeptide: MENLNALVDAALAEVEQAGDIRALDDVRVKYLGKKGEISALMKGLGKLSAEERPQAGAVINEGKQKVQDAIADRKSAMEEAALKQQLASETVDVTLPGRGELPGGLHPVNRMRRRIEDFFLRLGFDISEGPEVEDDFHNFEALNIPSHHPARAMHDTFYFGDGRLLRTHTSPVQVRVMEQGKPPFRIIAPGRVYRCDSDLTHTPMFHQVEGLLVDKGITFADLRGTVAEFLRYTFEVEDLPVRFRPSYFPFTEPSAEVDVGCVSCGGEGCRVCSHTGWIEIMGCGMVHPTVLEAGGVDAEEYSGFAFGMGIERIAMLRYGVNDLRLFFENDTRFLSQFG.

Position 253 (glutamate 253) interacts with Mg(2+).

This sequence belongs to the class-II aminoacyl-tRNA synthetase family. Phe-tRNA synthetase alpha subunit type 1 subfamily. In terms of assembly, tetramer of two alpha and two beta subunits. Mg(2+) serves as cofactor.

It is found in the cytoplasm. The catalysed reaction is tRNA(Phe) + L-phenylalanine + ATP = L-phenylalanyl-tRNA(Phe) + AMP + diphosphate + H(+). This chain is Phenylalanine--tRNA ligase alpha subunit, found in Alcanivorax borkumensis (strain ATCC 700651 / DSM 11573 / NCIMB 13689 / SK2).